Reading from the N-terminus, the 275-residue chain is 2,3,4,5-tetrahydropyridine-2,6-dicarboxylate N-succinyltransferase (275 aa).

The substrate site is built by R106 and D143.

It belongs to the transferase hexapeptide repeat family. In terms of assembly, homotrimer.

The protein resides in the cytoplasm. The catalysed reaction is (S)-2,3,4,5-tetrahydrodipicolinate + succinyl-CoA + H2O = (S)-2-succinylamino-6-oxoheptanedioate + CoA. It functions in the pathway amino-acid biosynthesis; L-lysine biosynthesis via DAP pathway; LL-2,6-diaminopimelate from (S)-tetrahydrodipicolinate (succinylase route): step 1/3. This is 2,3,4,5-tetrahydropyridine-2,6-dicarboxylate N-succinyltransferase from Burkholderia mallei (strain NCTC 10247).